Here is a 402-residue protein sequence, read N- to C-terminus: S-adenosylmethionine synthase (402 aa).

His15 serves as a coordination point for ATP. A Mg(2+)-binding site is contributed by Asp17. Glu43 contacts K(+). Residues Glu56 and Gln99 each contribute to the L-methionine site. Positions 99–109 (QSPDIAQGVDT) are flexible loop. ATP is bound by residues 174-176 (DGK), 247-248 (RF), Asp256, 262-263 (RK), Ala279, and Lys283. L-methionine is bound at residue Asp256. An L-methionine-binding site is contributed by Lys287.

It belongs to the AdoMet synthase family. In terms of assembly, homotetramer; dimer of dimers. Mg(2+) is required as a cofactor. Requires K(+) as cofactor.

The protein resides in the cytoplasm. The catalysed reaction is L-methionine + ATP + H2O = S-adenosyl-L-methionine + phosphate + diphosphate. It participates in amino-acid biosynthesis; S-adenosyl-L-methionine biosynthesis; S-adenosyl-L-methionine from L-methionine: step 1/1. Its function is as follows. Catalyzes the formation of S-adenosylmethionine (AdoMet) from methionine and ATP. The overall synthetic reaction is composed of two sequential steps, AdoMet formation and the subsequent tripolyphosphate hydrolysis which occurs prior to release of AdoMet from the enzyme. The protein is S-adenosylmethionine synthase of Streptomyces avermitilis (strain ATCC 31267 / DSM 46492 / JCM 5070 / NBRC 14893 / NCIMB 12804 / NRRL 8165 / MA-4680).